The primary structure comprises 901 residues: HTH-type transcriptional regulator MalT (901 aa).

39 to 46 (SPAGYGKT) is a binding site for ATP. Residues 829-894 (ELIRTSPLTQ…DAVQHAQQLL (66 aa)) enclose the HTH luxR-type domain. The segment at residues 853-872 (NEQIAGELAVAATTIKTHIR) is a DNA-binding region (H-T-H motif).

This sequence belongs to the MalT family. In terms of assembly, monomer in solution. Oligomerizes to an active state in the presence of the positive effectors ATP and maltotriose.

With respect to regulation, activated by ATP and maltotriose, which are both required for DNA binding. Positively regulates the transcription of the maltose regulon whose gene products are responsible for uptake and catabolism of malto-oligosaccharides. Specifically binds to the promoter region of its target genes, recognizing a short DNA motif called the MalT box. The polypeptide is HTH-type transcriptional regulator MalT (Enterobacter sp. (strain 638)).